The chain runs to 494 residues: Glycerol kinase (494 aa).

Threonine 13 is an ADP binding site. 3 residues coordinate ATP: threonine 13, threonine 14, and serine 15. Threonine 13 serves as a coordination point for sn-glycerol 3-phosphate. Arginine 17 serves as a coordination point for ADP. Sn-glycerol 3-phosphate is bound by residues arginine 83, glutamate 84, tyrosine 135, and aspartate 244. Residues arginine 83, glutamate 84, tyrosine 135, aspartate 244, and glutamine 245 each coordinate glycerol. ADP contacts are provided by threonine 266 and glycine 309. Threonine 266, glycine 309, glutamine 313, and glycine 410 together coordinate ATP. ADP is bound by residues glycine 410 and asparagine 414.

Belongs to the FGGY kinase family.

The catalysed reaction is glycerol + ATP = sn-glycerol 3-phosphate + ADP + H(+). The protein operates within polyol metabolism; glycerol degradation via glycerol kinase pathway; sn-glycerol 3-phosphate from glycerol: step 1/1. Its activity is regulated as follows. Inhibited by fructose 1,6-bisphosphate (FBP). In terms of biological role, key enzyme in the regulation of glycerol uptake and metabolism. Catalyzes the phosphorylation of glycerol to yield sn-glycerol 3-phosphate. The chain is Glycerol kinase from Shewanella sp. (strain MR-7).